Here is a 542-residue protein sequence, read N- to C-terminus: MARYVFITGGVVSSLGKGIAAAALAALLQARGYSVRLRKLDPYLNVDPGTMSPYQHGEVFVTDDGAETDLDLGHYERFTGRSANSQDNITTGRIYRNIIERERRGDYLGATVQVIPHVTDEIKRFITTGNEEFDFVLCEIGGTVGDIEAMPFLEAIRQLHNELPRQNVIYVHLTLMPYISSAGELKTKPTQHSVKELQSVGIAPDILLVRADRPIPETERSKLSLFCNVRPTAVIQALDMPTIYDVPIAYHKEGLDSEVLSAFGMHPAHKPNMDRWEDITHRIHHPEGEVTIAVVGKYTGLKDAYKSLTEAIAHGGLANKVKVNIEWIDAELFEREDPTSTLRKVHGILVPGAFGVRGAEGKMRAIQFARERRVPFFGICFGMQLACIEAARNIAQIENASSSEFCETKNPIVGLMTEWLKGDVLEKRTKCGNFGGTMRLGAFAAELKENSHIAQIYGMTRIYERHRHRYEVNIDYKDKLEQCGLVFSGMSPDGVLPETIEYADHPWFIGVQYHPELKSRPFDPHPLFSSFIEATVEQSRLV.

The segment at 1 to 265 (MARYVFITGG…DSEVLSAFGM (265 aa)) is amidoligase domain. Residue S13 coordinates CTP. A UTP-binding site is contributed by S13. Residue 14-19 (SLGKGI) coordinates ATP. Residue Y54 coordinates L-glutamine. ATP is bound at residue D71. Mg(2+)-binding residues include D71 and E139. Residues 146–148 (DIE), 186–191 (KTKPTQ), and K222 contribute to the CTP site. UTP contacts are provided by residues 186-191 (KTKPTQ) and K222. Residues 291–541 (TIAVVGKYTG…IEATVEQSRL (251 aa)) enclose the Glutamine amidotransferase type-1 domain. L-glutamine is bound at residue A353. C380 serves as the catalytic Nucleophile; for glutamine hydrolysis. Residues 381–384 (FGMQ), E404, and R469 contribute to the L-glutamine site. Catalysis depends on residues H514 and E516.

Belongs to the CTP synthase family. Homotetramer.

The catalysed reaction is UTP + L-glutamine + ATP + H2O = CTP + L-glutamate + ADP + phosphate + 2 H(+). It carries out the reaction L-glutamine + H2O = L-glutamate + NH4(+). The enzyme catalyses UTP + NH4(+) + ATP = CTP + ADP + phosphate + 2 H(+). It functions in the pathway pyrimidine metabolism; CTP biosynthesis via de novo pathway; CTP from UDP: step 2/2. Its activity is regulated as follows. Allosterically activated by GTP, when glutamine is the substrate; GTP has no effect on the reaction when ammonia is the substrate. The allosteric effector GTP functions by stabilizing the protein conformation that binds the tetrahedral intermediate(s) formed during glutamine hydrolysis. Inhibited by the product CTP, via allosteric rather than competitive inhibition. Catalyzes the ATP-dependent amination of UTP to CTP with either L-glutamine or ammonia as the source of nitrogen. Regulates intracellular CTP levels through interactions with the four ribonucleotide triphosphates. The chain is CTP synthase from Bartonella henselae (strain ATCC 49882 / DSM 28221 / CCUG 30454 / Houston 1) (Rochalimaea henselae).